We begin with the raw amino-acid sequence, 616 residues long: MPKYRSATTTHGRNMAGARALWRATGMTDADFGKPIIAVVNSFTQFVPGHVHLRDLGKLVAEQIEAAGGVAKEFNTIAVDDGIAMGHGGMLYSLPSRELIADSVEYMVNAHCADAMVCISNCDKITPGMLMASLRLNIPVIFVSGGPMEAGKTKLSDQIIKLDLVDAMIQGADPKVSDSQSDQVERSACPTCGSCSGMFTANSMNCLTEALGLSQPGNGSLLATHADRKQLFLNAGKRIVELTKRYYEQNDESALPRNIASKAAFENAMTLDIAMGGSTNTVLHLLAAAQEAEIDFTMSDIDKLSRKVPQLCKVAPSTQKYHMEDVHRAGGVIGILGELDRAGLLNRDVKNVLGLTLPQTLEQYDVMLTQDDAVKNMFRAGPAGIRTTQAFSQDCRWDSLDDDRANGCIRSLEHAYSKDGGLAVLYGNFAENGCIVKTAGVDDSILKFTGPAKVYESQDDAVEAILGGKVVAGDVVVIRYEGPKGGPGMQEMLYPTSFLKSMGLGKACALITDGRFSGGTSGLSIGHVSPEAASGGSIGLIEDGDLIAIDIPNRGIQLQVSDAELAARREAQDARGDKAWTPKNRERQVSFALRAYASLATSADKGAVRDKSKLGG.

Asp81 serves as a coordination point for Mg(2+). Cys122 serves as a coordination point for [2Fe-2S] cluster. Residues Asp123 and Lys124 each contribute to the Mg(2+) site. Lys124 is modified (N6-carboxylysine). Cys195 serves as a coordination point for [2Fe-2S] cluster. Glu491 contributes to the Mg(2+) binding site. The active-site Proton acceptor is the Ser517.

It belongs to the IlvD/Edd family. Homodimer. [2Fe-2S] cluster is required as a cofactor. Requires Mg(2+) as cofactor.

It carries out the reaction (2R)-2,3-dihydroxy-3-methylbutanoate = 3-methyl-2-oxobutanoate + H2O. The enzyme catalyses (2R,3R)-2,3-dihydroxy-3-methylpentanoate = (S)-3-methyl-2-oxopentanoate + H2O. The protein operates within amino-acid biosynthesis; L-isoleucine biosynthesis; L-isoleucine from 2-oxobutanoate: step 3/4. It functions in the pathway amino-acid biosynthesis; L-valine biosynthesis; L-valine from pyruvate: step 3/4. In terms of biological role, functions in the biosynthesis of branched-chain amino acids. Catalyzes the dehydration of (2R,3R)-2,3-dihydroxy-3-methylpentanoate (2,3-dihydroxy-3-methylvalerate) into 2-oxo-3-methylpentanoate (2-oxo-3-methylvalerate) and of (2R)-2,3-dihydroxy-3-methylbutanoate (2,3-dihydroxyisovalerate) into 2-oxo-3-methylbutanoate (2-oxoisovalerate), the penultimate precursor to L-isoleucine and L-valine, respectively. The protein is Dihydroxy-acid dehydratase of Escherichia coli (strain 55989 / EAEC).